The primary structure comprises 309 residues: Glutaminase (309 aa).

Residues Ser64, Asn114, Glu160, Asn167, Tyr191, Tyr243, and Val261 each coordinate substrate.

This sequence belongs to the glutaminase family. As to quaternary structure, homotetramer.

The enzyme catalyses L-glutamine + H2O = L-glutamate + NH4(+). In Rhizobium etli (strain CIAT 652), this protein is Glutaminase.